Here is a 76-residue protein sequence, read N- to C-terminus: Theta defensin subunit B (76 aa).

A signal peptide spans 1-22 (MRTFALLTAMLLLVALQPQAEA). Positions 23 to 64 (RQARADEAAAQQQPGADDQGMAHSFTRPENAALPLSESAKGL) are excised as a propeptide. The tract at residues 24–54 (QARADEAAAQQQPGADDQGMAHSFTRPENAA) is disordered. Positions 30–44 (AAAQQQPGADDQGMA) are enriched in low complexity. Arg-65 is covalently cross-linked (Cyclopeptide (Arg-Cys) (interchain with C-73 in subunit A); in form BTD-1). Arg-65 is covalently cross-linked (Cyclopeptide (Arg-Cys) (interchain with C-73 in subunit B); in form BTD-2). Residues Cys-68 and Cys-73 are joined by a disulfide bond. Cys-73 participates in a covalent cross-link: Cyclopeptide (Cys-Arg) (interchain with R-65 in subunit A); in form BTD-1. Cys-73 is covalently cross-linked (Cyclopeptide (Cys-Arg) (interchain with R-65 in subunit B); in form BTD-2). Positions 74–76 (QLL) are excised as a propeptide.

It belongs to the alpha-defensin family. Theta subfamily. In terms of assembly, BTD-1 is a cyclic heterodimer composed of subunits A and B; disulfide-linked. BTD-2 is a cyclic homodimer composed of two subunits B; disulfide-linked. Forms a cyclic peptide with subunit A (BTD-1), or subunit B (BTD-2). An additional intersubunit disulfide bond is formed.

Functionally, BTD-1 and BTD-2 have antimicrobial activity against the Gram-negative bacterium E.coli ML35, the Gram-positive bacterium S.aureus 502a, and the fungus C.albicans 16820. BTD-2 is more effective against E.coli than BTD-1. The sequence is that of Theta defensin subunit B (BTDB) from Papio anubis (Olive baboon).